The primary structure comprises 213 residues: Holliday junction resolvase RecU (213 aa).

Mg(2+) contacts are provided by threonine 99, aspartate 101, glutamate 114, and glutamine 133.

Belongs to the RecU family. Mg(2+) serves as cofactor.

The protein resides in the cytoplasm. It catalyses the reaction Endonucleolytic cleavage at a junction such as a reciprocal single-stranded crossover between two homologous DNA duplexes (Holliday junction).. Its function is as follows. Endonuclease that resolves Holliday junction intermediates in genetic recombination. Cleaves mobile four-strand junctions by introducing symmetrical nicks in paired strands. Promotes annealing of linear ssDNA with homologous dsDNA. Required for DNA repair, homologous recombination and chromosome segregation. The protein is Holliday junction resolvase RecU of Lactococcus lactis subsp. cremoris (strain SK11).